The chain runs to 503 residues: ATP synthase subunit alpha (503 aa).

169-176 serves as a coordination point for ATP; that stretch reads GDRGTGKT.

It belongs to the ATPase alpha/beta chains family. In terms of assembly, F-type ATPases have 2 components, CF(1) - the catalytic core - and CF(0) - the membrane proton channel. CF(1) has five subunits: alpha(3), beta(3), gamma(1), delta(1), epsilon(1). CF(0) has three main subunits: a(1), b(2) and c(9-12). The alpha and beta chains form an alternating ring which encloses part of the gamma chain. CF(1) is attached to CF(0) by a central stalk formed by the gamma and epsilon chains, while a peripheral stalk is formed by the delta and b chains.

The protein localises to the cell inner membrane. It catalyses the reaction ATP + H2O + 4 H(+)(in) = ADP + phosphate + 5 H(+)(out). Its function is as follows. Produces ATP from ADP in the presence of a proton gradient across the membrane. The alpha chain is a regulatory subunit. The protein is ATP synthase subunit alpha of Leptospira interrogans serogroup Icterohaemorrhagiae serovar copenhageni (strain Fiocruz L1-130).